Here is a 365-residue protein sequence, read N- to C-terminus: Gibberellin 20 oxidase 1-A (365 aa).

The 101-residue stretch at 199-299 folds into the Fe2OG dioxygenase domain; the sequence is GNDSIMRLNY…RKSLAFFLCP (101 aa). Residues H224, D226, and H280 each coordinate Fe cation. Residue R290 is part of the active site.

This sequence belongs to the iron/ascorbate-dependent oxidoreductase family. GA20OX subfamily. The cofactor is Fe cation. L-ascorbate serves as cofactor. As to expression, expressed in nodes and the ear of the elongating stem.

It carries out the reaction gibberellin A12 + 2 2-oxoglutarate + 3 O2 + H(+) = gibberellin A9 + 2 succinate + 3 CO2 + 2 H2O. It catalyses the reaction gibberellin A53 + 2 2-oxoglutarate + 3 O2 + H(+) = gibberellin A20 + 2 succinate + 3 CO2 + 2 H2O. Key oxidase enzyme in the biosynthesis of gibberellin that catalyzes the conversion of GA12 and GA53 to GA9 and GA20 respectively, via a three-step oxidation at C-20 of the GA skeleton. This is Gibberellin 20 oxidase 1-A (GA20ox1A) from Triticum aestivum (Wheat).